The sequence spans 354 residues: MTELKNDRYLRALLRQPVDVTPVWMMRQAGRYLPEYKATRAQAGDFMSLCKNAELACEVTLQPLRRYPLDAAILFSDILTVPDAMGLGLYFEAGEGPRFTSPVTCKADVDKLPIPDPEDELGYVMNAVRTIRRELKGEVPLIGFSGSPWTLATYMVEGGSSKAFTVIKKMMYADPQALHALLDKLAKSVTLYLNAQIKAGAQAVMIFDTWGGVLTGRDYQQFSLYYMHKIVNGLLRENDGRRVPVTLFTKGGGQWLEAMAETGCDALGLDWTTDIADARRRVGNKVALQGNMDPSMLYAPPARIEEEVASILAGFGHGEGHVFNLGHGIHQDVPPEHAGVFVEAVHRLSEQYHR.

Substrate is bound by residues 27-31 (RQAGR), aspartate 77, tyrosine 154, threonine 209, and histidine 327.

The protein belongs to the uroporphyrinogen decarboxylase family. In terms of assembly, homodimer.

The protein resides in the cytoplasm. It carries out the reaction uroporphyrinogen III + 4 H(+) = coproporphyrinogen III + 4 CO2. It participates in porphyrin-containing compound metabolism; protoporphyrin-IX biosynthesis; coproporphyrinogen-III from 5-aminolevulinate: step 4/4. Its function is as follows. Catalyzes the decarboxylation of four acetate groups of uroporphyrinogen-III to yield coproporphyrinogen-III. The sequence is that of Uroporphyrinogen decarboxylase from Escherichia coli O81 (strain ED1a).